We begin with the raw amino-acid sequence, 1051 residues long: Putative transcription factor SEF1 (1051 aa).

The span at 1-10 (MSTDVSERGA) shows a compositional bias: basic and acidic residues. Disordered stretches follow at residues 1 to 54 (MSTD…SEES) and 67 to 90 (GQAS…RPVT). Residues 11–21 (EAGSSSGLLSS) show a composition bias toward low complexity. Positions 92-122 (CTHCRQHKIKCNASENFPSSCSRCERMGLQC) form a DNA-binding region, zn(2)-C6 fungal-type. Positions 206–218 (SSVKSSVNTPSGS) are enriched in low complexity. 3 disordered regions span residues 206–227 (SSVK…VDVS), 738–759 (EKNR…TEKR), and 927–968 (ASGN…QPAP).

The protein localises to the nucleus. Putative transcription factor. The sequence is that of Putative transcription factor SEF1 (SEF1) from Eremothecium gossypii (strain ATCC 10895 / CBS 109.51 / FGSC 9923 / NRRL Y-1056) (Yeast).